The primary structure comprises 441 residues: Glutamate--tRNA ligase 2 (441 aa).

The 'HIGH' region motif lies at 8 to 18 (PSPTGYIHVGN). Residues 239 to 243 (ALSKR) carry the 'KMSKS' region motif. K242 provides a ligand contact to ATP.

Belongs to the class-I aminoacyl-tRNA synthetase family. Glutamate--tRNA ligase type 1 subfamily. Monomer.

It is found in the cytoplasm. The enzyme catalyses tRNA(Glu) + L-glutamate + ATP = L-glutamyl-tRNA(Glu) + AMP + diphosphate. Its function is as follows. Catalyzes the attachment of glutamate to tRNA(Glu) in a two-step reaction: glutamate is first activated by ATP to form Glu-AMP and then transferred to the acceptor end of tRNA(Glu). The polypeptide is Glutamate--tRNA ligase 2 (Ruegeria sp. (strain TM1040) (Silicibacter sp.)).